Reading from the N-terminus, the 118-residue chain is Protein YLR162W (118 aa).

Residues 1 to 20 (MQHTLTRTASLPERSSSAHS) are compositionally biased toward polar residues. Residues 1–26 (MQHTLTRTASLPERSSSAHSAATALP) form a disordered region. A helical transmembrane segment spans residues 38-58 (LVPLLCIFWFVFVSMSPLPPA).

The protein resides in the membrane. Functionally, overexpression confers resistance to the antimicrobial peptide MiAMP1. The chain is Protein YLR162W from Saccharomyces cerevisiae (strain ATCC 204508 / S288c) (Baker's yeast).